A 472-amino-acid polypeptide reads, in one-letter code: Protein c-ets-2-B (472 aa).

The PNT domain occupies 85-170 (DTFNGFAKER…EHLEEMMKEY (86 aa)). Residues 366–446 (IQLWQFLLEL…SGKRYVYRFV (81 aa)) constitute a DNA-binding region (ETS).

It belongs to the ETS family.

It localises to the nucleus. In terms of biological role, probable transcription factor. This Xenopus laevis (African clawed frog) protein is Protein c-ets-2-B (ets2-b).